The chain runs to 339 residues: tRNA pseudouridine synthase D (339 aa).

Asp-80 serves as the catalytic Nucleophile. Residues 155-311 enclose the TRUD domain; it reads GFPNYFTEQR…AKGFSWAFEP (157 aa).

It belongs to the pseudouridine synthase TruD family.

The enzyme catalyses uridine(13) in tRNA = pseudouridine(13) in tRNA. Functionally, responsible for synthesis of pseudouridine from uracil-13 in transfer RNAs. The protein is tRNA pseudouridine synthase D of Haemophilus influenzae (strain 86-028NP).